A 773-amino-acid polypeptide reads, in one-letter code: DC-STAMP domain-containing protein 2 (773 aa).

Over 1–26 (MPKVMKDVVHPLGGEEPSMARAVVRS) the chain is Cytoplasmic. A helical membrane pass occupies residues 27–47 (VGGFTLGLSLATAYGLLELLV). The Extracellular segment spans residues 48–51 (EGHS). A helical transmembrane segment spans residues 52-72 (PWGCLVGTLTLAAFLSLGMGF). The Cytoplasmic portion of the chain corresponds to 73–233 (SRQVRATVLL…IPQAYHLCYV (161 aa)). The helical transmembrane segment at 234–254 (LMPFKLALCGLASLVQVFCVI) threads the bilayer. Topologically, residues 255-322 (PKYIQPFLRQ…SMKLHRVREA (68 aa)) are extracellular. N-linked (GlcNAc...) asparagine glycosylation is found at asparagine 284 and asparagine 296. Residues 323–343 (LALMGFTTPLLLVLLYLQALF) traverse the membrane as a helical segment. Residues 344 to 415 (YRYCYLNWDH…ILETFNLIRH (72 aa)) are Cytoplasmic-facing. The helical transmembrane segment at 416 to 436 (LLLVLFLVFLDYAVFWVLDLA) threads the bilayer. Over 437 to 499 (RHQLQGEIVA…LRPSEPDSTG (63 aa)) the chain is Extracellular. N-linked (GlcNAc...) asparagine glycosylation is present at asparagine 480. A helical transmembrane segment spans residues 500 to 520 (YIVIGVMYGLCFFITLFGSYV). The Cytoplasmic portion of the chain corresponds to 521–773 (SRLRRVICAS…LPDPSHPPPK (253 aa)). Low complexity predominate over residues 692-701 (SLSMESTSES). Residues 692–773 (SLSMESTSES…LPDPSHPPPK (82 aa)) are disordered. Pro residues predominate over residues 758 to 773 (PLSPPSLPDPSHPPPK).

As to quaternary structure, interacts with DCST1.

Its subcellular location is the cytoplasmic vesicle. The protein resides in the secretory vesicle. It is found in the acrosome membrane. Its function is as follows. Essential sperm cell-surface protein required for sperm-egg fusion and fertilization. The polypeptide is DC-STAMP domain-containing protein 2 (DCST2) (Homo sapiens (Human)).